The sequence spans 285 residues: Phosphate import ATP-binding protein PstB (285 aa).

The ABC transporter domain occupies 39-280; it reads LEVSDLQLWY…PAKKQTEDYI (242 aa). 71-78 lines the ATP pocket; it reads GPSGCGKS.

This sequence belongs to the ABC transporter superfamily. Phosphate importer (TC 3.A.1.7) family. As to quaternary structure, the complex is composed of two ATP-binding proteins (PstB), two transmembrane proteins (PstC and PstA) and a solute-binding protein (PstS).

It is found in the cell inner membrane. The catalysed reaction is phosphate(out) + ATP + H2O = ADP + 2 phosphate(in) + H(+). Its function is as follows. Part of the ABC transporter complex PstSACB involved in phosphate import. Responsible for energy coupling to the transport system. The protein is Phosphate import ATP-binding protein PstB of Alkalilimnicola ehrlichii (strain ATCC BAA-1101 / DSM 17681 / MLHE-1).